The primary structure comprises 224 residues: UPF0758 protein Sde_3678 (224 aa).

One can recognise an MPN domain in the interval Ser102–Ile224. The Zn(2+) site is built by His173, His175, and Asp186. Residues His173–Asp186 carry the JAMM motif motif.

The protein belongs to the UPF0758 family.

The sequence is that of UPF0758 protein Sde_3678 from Saccharophagus degradans (strain 2-40 / ATCC 43961 / DSM 17024).